The following is a 487-amino-acid chain: Bifunctional cytokinin biosynthesis protein (487 aa).

The interval 1-266 (MESTNRFMIG…RMASDFCYAS (266 aa)) is adenylate isopentenyltransferase. The segment at 267-487 (TSISFHPINE…FSRKGELEWV (221 aa)) is cytokinin riboside 5'-monophosphate phosphoribohydrolase. Substrate contacts are provided by residues Glu-352, 380–381 (RK), 403–409 (GYGTLEE), and Thr-415.

In the N-terminal section; belongs to the IPP transferase family. The protein in the C-terminal section; belongs to the LOG family.

The enzyme catalyses dimethylallyl diphosphate + AMP = N(6)-(dimethylallyl)adenosine 5'-phosphate + diphosphate. The catalysed reaction is N(6)-(dimethylallyl)adenosine 5'-phosphate + H2O = N(6)-dimethylallyladenine + D-ribose 5-phosphate. It carries out the reaction 9-ribosyl-trans-zeatin 5'-phosphate + H2O = trans-zeatin + D-ribose 5-phosphate. Its pathway is secondary metabolite biosynthesis. Functionally, bifunctional cytokinin synthesis protein; part of the gene cluster that mediates the biosynthesis of cytokinins such as fusatin, fusatinic acids or 8-oxofusatin, known for their growth promoting and anti-senescence activities toward host plants. FCK1 is a bifunctional enzyme that performs the first steps in the biosynthesis of Fusarium cytokinins. It first condenses adenosine monophosphate (AMP) with dimethylallyl diphosphate (DMAPP) to yield isoprenyl adenosine monophosphate. It then catalyzes the removal of the phosphoribose to produce isopentenylaldehyde. The cytochrome P450 monooxygenase then converts isopentenylaldehyde to trans-zeatin. A condensation step converts trans-zeatin to fusatin which is further modified to produce fusatinic acid. The mechanism for oxidation of fusatin to fusatinic acid remains unknown. 8-oxofusatin could be produced through several pathways, via direct oxygenation of fusatin, or via the 8-oxo-pentenyladenine intermediate which itself must arise from either the prenylation of 8-oxo-AMP by FCK1 and/or oxygenation of isopentenylaldehyde. Both the FCK3 and FCK4 enzymes act downstream of the identified cytokinins to produce yet unidentified compounds. The polypeptide is Bifunctional cytokinin biosynthesis protein (Fusarium pseudograminearum (strain CS3096) (Wheat and barley crown-rot fungus)).